The primary structure comprises 386 residues: MLPLSIKDDEYKPPKFNLARKVSGWIRSIFSDSTSRNLFCFLCLNLSFAFVELFYGIWSNSLGLISDSFHMFFDCTALLAGLAASVISRWKTNEAFSYGYVRAEVLAGFVNGLFLIFTAFFIFSEGVERALDTPEVHHERLLPVSIMGLLVNIIGIFVFQHGGGHGHSHESGHGHSHSLFNGAVSHGHSHGGGHGHSHEGGHGHSHSQGGGHGHSHDHSPKHGYGSSCHDEPPEEHKGSSKQILEGVFLHIVADTLGSVGVIFSTILMQRYGLMIADPICSMLIALLIFVSVIPLLKQSIGILMQRTPPALDHVLPQCYQRVQQLQGVYHLQEPHFWTLCTDVYIGTLKLVIGPEADARWILSQTHNIFTQAGVRQLYVQIDFAAI.

At 1-37 (MLPLSIKDDEYKPPKFNLARKVSGWIRSIFSDSTSRN) the chain is on the cytoplasmic side. Residues 38–58 (LFCFLCLNLSFAFVELFYGIW) traverse the membrane as a helical segment. The Lumenal portion of the chain corresponds to 59-67 (SNSLGLISD). A helical transmembrane segment spans residues 68–88 (SFHMFFDCTALLAGLAASVIS). The Cytoplasmic segment spans residues 89 to 102 (RWKTNEAFSYGYVR). Residues 103 to 123 (AEVLAGFVNGLFLIFTAFFIF) form a helical membrane-spanning segment. At 124–140 (SEGVERALDTPEVHHER) the chain is on the lumenal side. The chain crosses the membrane as a helical span at residues 141-161 (LLPVSIMGLLVNIIGIFVFQH). The segment at 161–222 (HGGGHGHSHE…GHSHDHSPKH (62 aa)) is his-rich loop. Residues 162–246 (GGGHGHSHES…KGSSKQILEG (85 aa)) lie on the Cytoplasmic side of the membrane. The disordered stretch occupies residues 167–239 (HSHESGHGHS…DEPPEEHKGS (73 aa)). Positions 228–238 (CHDEPPEEHKG) are enriched in basic and acidic residues. Residues 247-267 (VFLHIVADTLGSVGVIFSTIL) form a helical membrane-spanning segment. Residues 268-272 (MQRYG) lie on the Lumenal side of the membrane. Residues 273–293 (LMIADPICSMLIALLIFVSVI) form a helical membrane-spanning segment. Residues 294 to 386 (PLLKQSIGIL…LYVQIDFAAI (93 aa)) are Cytoplasmic-facing.

This sequence belongs to the cation diffusion facilitator (CDF) transporter (TC 2.A.4) family. SLC30A subfamily. In terms of assembly, homooligomer.

Its subcellular location is the golgi apparatus membrane. It is found in the cytoplasmic vesicle. The protein localises to the golgi apparatus. It localises to the trans-Golgi network. The protein resides in the sarcoplasmic reticulum. Its subcellular location is the mitochondrion. It catalyses the reaction Zn(2+)(in) = Zn(2+)(out). In terms of biological role, zinc ion transporter mediating zinc entry from the cytosol into the lumen of organelles along the secretory pathway. By contributing to zinc ion homeostasis within the early secretory pathway, regulates the activation and folding of enzymes like alkaline phosphatases. The polypeptide is Zinc transporter 7-A (slc30a7-a) (Xenopus laevis (African clawed frog)).